The following is a 500-amino-acid chain: Glycerol kinase (500 aa).

T13 provides a ligand contact to ADP. The ATP site is built by T13, T14, and S15. T13 contributes to the sn-glycerol 3-phosphate binding site. ADP is bound at residue R17. Sn-glycerol 3-phosphate-binding residues include R83, E84, Y135, and D245. R83, E84, Y135, D245, and Q246 together coordinate glycerol. ADP is bound by residues T267 and G310. 4 residues coordinate ATP: T267, G310, Q314, and G411. ADP contacts are provided by G411 and N415.

The protein belongs to the FGGY kinase family. In terms of assembly, homotetramer and homodimer (in equilibrium).

The catalysed reaction is glycerol + ATP = sn-glycerol 3-phosphate + ADP + H(+). The protein operates within polyol metabolism; glycerol degradation via glycerol kinase pathway; sn-glycerol 3-phosphate from glycerol: step 1/1. With respect to regulation, activated by phosphorylation and inhibited by fructose 1,6-bisphosphate (FBP). Functionally, key enzyme in the regulation of glycerol uptake and metabolism. Catalyzes the phosphorylation of glycerol to yield sn-glycerol 3-phosphate. In Lactobacillus acidophilus (strain ATCC 700396 / NCK56 / N2 / NCFM), this protein is Glycerol kinase.